The chain runs to 813 residues: Probable E3 ubiquitin-protein ligase hulA (813 aa).

Residues 1-109 (MGSNLPAQPN…QMGGDEMLTR (109 aa)) form the C2 domain. 2 disordered regions span residues 131-235 (NLST…GWER) and 251-351 (RTTT…YFVD). Positions 148–167 (VQSSTSSGLVPQVAPSSSHP) are enriched in polar residues. The span at 188 to 215 (RVPSTTRPSSTAAPASAAGAAVSNSHGS) shows a compositional bias: low complexity. The WW 1 domain occupies 227–260 (GRLPAGWERREDNLGRTYYVDHNTRTTTWTRPSS). The segment covering 251–264 (RTTTWTRPSSNYNE) has biased composition (polar residues). A compositionally biased stretch (basic and acidic residues) spans 265–292 (HAQRSQREANMQLERRAHQSRMLPEDRT). Positions 293–307 (GANSPNLPESSQQAH) are enriched in polar residues. Residues 322–331 (ATGATTAGTG) are compositionally biased toward low complexity. WW domains are found at residues 331 to 364 (GELP…DPRR) and 391 to 424 (GPLP…DPRL). The 334-residue stretch at 480–813 (SASDLKKRLM…VEETLGFGQE (334 aa)) folds into the HECT domain. Cysteine 781 (glycyl thioester intermediate) is an active-site residue.

This sequence belongs to the RSP5/NEDD4 family. As to quaternary structure, interacts with creD.

Its subcellular location is the cytoplasm. The enzyme catalyses S-ubiquitinyl-[E2 ubiquitin-conjugating enzyme]-L-cysteine + [acceptor protein]-L-lysine = [E2 ubiquitin-conjugating enzyme]-L-cysteine + N(6)-ubiquitinyl-[acceptor protein]-L-lysine.. The protein operates within protein modification; protein ubiquitination. Its function is as follows. E3 ubiquitin-protein ligase which accepts ubiquitin from an E2 ubiquitin-conjugating enzyme in the form of a thioester and then directly transfers the ubiquitin to targeted substrates. Probably involved in the regulatory network controlling carbon source utilization. In Aspergillus fumigatus (strain CBS 144.89 / FGSC A1163 / CEA10) (Neosartorya fumigata), this protein is Probable E3 ubiquitin-protein ligase hulA (hulA).